Reading from the N-terminus, the 141-residue chain is VLSPADKSNVKAAWDKVGGSAGDYGAEALERMFLSFPTTKTYFPHFDLSHGSAQVKGHGKKVGDALGNAVAHLDDLPGALSALSDLHAHKLRVDPVNFKLLSHCLLVTVACHHPNDFTPAVHASLDKFLANVSTVLVSKYR.

Residues 1–141 (VLSPADKSNV…VSTVLVSKYR (141 aa)) enclose the Globin domain. S3 bears the Phosphoserine mark. K7 and K11 each carry N6-succinyllysine. K16 carries the N6-acetyllysine; alternate modification. Residue K16 is modified to N6-succinyllysine; alternate. The residue at position 24 (Y24) is a Phosphotyrosine. S35 carries the phosphoserine modification. Residue K40 is modified to N6-succinyllysine. Position 49 is a phosphoserine (S49). Residue H58 participates in O2 binding. H87 contacts heme b. The residue at position 102 (S102) is a Phosphoserine. T108 carries the post-translational modification Phosphothreonine. The residue at position 124 (S124) is a Phosphoserine. The residue at position 134 (T134) is a Phosphothreonine. S138 carries the phosphoserine modification.

It belongs to the globin family. As to quaternary structure, heterotetramer of two alpha chains and two beta chains. In terms of tissue distribution, red blood cells.

Its function is as follows. Involved in oxygen transport from the lung to the various peripheral tissues. In terms of biological role, hemopressin acts as an antagonist peptide of the cannabinoid receptor CNR1. Hemopressin-binding efficiently blocks cannabinoid receptor CNR1 and subsequent signaling. This chain is Hemoglobin subunit alpha (HBA), found in Chalinolobus morio (Chocolate-wattled bat).